Here is a 286-residue protein sequence, read N- to C-terminus: Bifunctional protein FolD (286 aa).

Residues 166–168 and I232 contribute to the NADP(+) site; that span reads GAS.

The protein belongs to the tetrahydrofolate dehydrogenase/cyclohydrolase family. As to quaternary structure, homodimer.

The enzyme catalyses (6R)-5,10-methylene-5,6,7,8-tetrahydrofolate + NADP(+) = (6R)-5,10-methenyltetrahydrofolate + NADPH. It catalyses the reaction (6R)-5,10-methenyltetrahydrofolate + H2O = (6R)-10-formyltetrahydrofolate + H(+). Its pathway is one-carbon metabolism; tetrahydrofolate interconversion. Catalyzes the oxidation of 5,10-methylenetetrahydrofolate to 5,10-methenyltetrahydrofolate and then the hydrolysis of 5,10-methenyltetrahydrofolate to 10-formyltetrahydrofolate. The chain is Bifunctional protein FolD from Shewanella piezotolerans (strain WP3 / JCM 13877).